The sequence spans 415 residues: Serine--tRNA ligase (415 aa).

230–232 serves as a coordination point for L-serine; sequence TAE. 261 to 263 is a binding site for ATP; that stretch reads RKE. L-serine is bound at residue E284. 348–351 contacts ATP; it reads EISS. L-serine is bound at residue S382.

Belongs to the class-II aminoacyl-tRNA synthetase family. Type-1 seryl-tRNA synthetase subfamily. In terms of assembly, homodimer. The tRNA molecule binds across the dimer.

The protein resides in the cytoplasm. The catalysed reaction is tRNA(Ser) + L-serine + ATP = L-seryl-tRNA(Ser) + AMP + diphosphate + H(+). It catalyses the reaction tRNA(Sec) + L-serine + ATP = L-seryl-tRNA(Sec) + AMP + diphosphate + H(+). It functions in the pathway aminoacyl-tRNA biosynthesis; selenocysteinyl-tRNA(Sec) biosynthesis; L-seryl-tRNA(Sec) from L-serine and tRNA(Sec): step 1/1. Catalyzes the attachment of serine to tRNA(Ser). Is also able to aminoacylate tRNA(Sec) with serine, to form the misacylated tRNA L-seryl-tRNA(Sec), which will be further converted into selenocysteinyl-tRNA(Sec). In Sulfurimonas denitrificans (strain ATCC 33889 / DSM 1251) (Thiomicrospira denitrificans (strain ATCC 33889 / DSM 1251)), this protein is Serine--tRNA ligase.